Reading from the N-terminus, the 372-residue chain is tRNA-specific 2-thiouridylase MnmA (372 aa).

ATP is bound by residues 7 to 14 and M33; that span reads GLSGGVDS. The segment at 104–106 is interaction with target base in tRNA; it reads NPD. C109 functions as the Nucleophile in the catalytic mechanism. A disulfide bridge connects residues C109 and C202. Residue G134 participates in ATP binding. An interaction with tRNA region spans residues 152–154; sequence KDQ. The Cysteine persulfide intermediate role is filled by C202. An interaction with tRNA region spans residues 310-311; that stretch reads RY.

This sequence belongs to the MnmA/TRMU family.

Its subcellular location is the cytoplasm. The catalysed reaction is S-sulfanyl-L-cysteinyl-[protein] + uridine(34) in tRNA + AH2 + ATP = 2-thiouridine(34) in tRNA + L-cysteinyl-[protein] + A + AMP + diphosphate + H(+). Functionally, catalyzes the 2-thiolation of uridine at the wobble position (U34) of tRNA, leading to the formation of s(2)U34. The chain is tRNA-specific 2-thiouridylase MnmA from Mesomycoplasma hyopneumoniae (strain 232) (Mycoplasma hyopneumoniae).